A 102-amino-acid polypeptide reads, in one-letter code: Spexin prohormone 1 (102 aa).

A signal peptide spans 1-26 (MKDLRTLAAYALALLLLATFVSYSRS). Positions 27-35 (APMGSFQRR) are excised as a propeptide. A Glutamine amide modification is found at Gln-49. The propeptide occupies 50 to 102 (GRRFVSEDRNEGDLYDTIRLESQSQNTENLSISKAAAFLLNVLQQARDEGEPY).

It belongs to the spexin family. As to expression, expressed in the anterior hypothalamus, ventromedial thalamic nucleus and medial longitudinal fasciculus of the brain (at protein level). Widely expressed. Expressed predominantly in the spleen, kidney, liver and testis. Expressed in olfactory bulb, pituitary, telencephalon, diencephalons, spinal cord, optic tectum, cerebellum and hypothalamus of the brain.

It localises to the secreted. The protein localises to the extracellular space. It is found in the cytoplasmic vesicle. The protein resides in the secretory vesicle. Functionally, plays a role in the regulation of food intake and body weight and in reproduction. May also play a role as a central modulator of cardiovascular and renal function and nociception. Brain administration of the peptide inhibits food consumption. May function as a satiety factor for feeding control. Involved in the negative regulation of the reproductive axis by inhibiting luteinizing hormone secretion from pituitary cells. The polypeptide is Spexin prohormone 1 (spx) (Carassius auratus (Goldfish)).